A 60-amino-acid chain; its full sequence is Metallothionein B (60 aa).

Residues methionine 1 to cysteine 28 are beta. 20 residues coordinate a divalent metal cation: cysteine 4, cysteine 6, cysteine 12, cysteine 14, cysteine 18, cysteine 20, cysteine 23, cysteine 25, cysteine 28, cysteine 32, cysteine 33, cysteine 35, cysteine 36, cysteine 40, cysteine 43, cysteine 47, cysteine 49, cysteine 54, cysteine 58, and cysteine 59. Positions lysine 29–glutamine 60 are alpha.

Belongs to the metallothionein superfamily. Type 1 family.

Functionally, metallothioneins have a high content of cysteine residues that bind various heavy metals. The chain is Metallothionein B (mtb) from Trematomus bernacchii (Emerald rockcod).